The sequence spans 758 residues: Calcium up-regulated protein E (758 aa).

Positions 1–22 are disordered; sequence MINIEDISKSSNQSEEKQLKST. 2 consecutive Ricin B-type lectin domains span residues 25-145 and 156-288; these read KPKY…WTTF and GYFQ…WIAN.

The protein belongs to the cup family.

It localises to the cytoplasm. The protein localises to the membrane. Its function is as follows. May play an important role in stabilizing and/or regulating the cell membrane during Ca(2+) stress or certain stages of development. In Dictyostelium discoideum (Social amoeba), this protein is Calcium up-regulated protein E (cupE).